The primary structure comprises 306 residues: Agmatinase (306 aa).

Mn(2+) is bound by residues His126, Asp149, His151, Asp153, Asp230, and Asp232.

It belongs to the arginase family. Agmatinase subfamily. Mn(2+) serves as cofactor.

It catalyses the reaction agmatine + H2O = urea + putrescine. It participates in amine and polyamine biosynthesis; putrescine biosynthesis via agmatine pathway; putrescine from agmatine: step 1/1. Functionally, catalyzes the formation of putrescine from agmatine. The protein is Agmatinase of Escherichia coli (strain SE11).